We begin with the raw amino-acid sequence, 213 residues long: CASP-like protein UU2 (213 aa).

The segment at 1–26 (MEDPKGAWQSDVFDNGRDFKPHDKAP) is disordered. The Cytoplasmic portion of the chain corresponds to 1–53 (MEDPKGAWQSDVFDNGRDFKPHDKAPANVTAGTTPPMYNVGAGGSEGNSKALS). Residues 14 to 25 (DNGRDFKPHDKA) show a composition bias toward basic and acidic residues. Residues 54 to 74 (IISIVLRCLSIMFNVVSLGVI) traverse the membrane as a helical segment. Topologically, residues 75 to 96 (ASNQGKSYFVVWRTLNSSNMQY) are extracellular. An N-linked (GlcNAc...) asparagine glycan is attached at Asn-90. A helical membrane pass occupies residues 97-117 (LFAINVIVLVYCVVQLILSII). At 118-137 (NLVQGKMVLSGPTQPASTIT) the chain is on the cytoplasmic side. The helical transmembrane segment at 138 to 158 (YICDQGLTYMLMAGFGAGVAL) threads the bilayer. Topologically, residues 159–184 (QASVDKGESGMLDCSGANEFCGKNKA) are extracellular. The helical transmembrane segment at 185–205 (SAALSFLGFVCIALSANLNYL) threads the bilayer. At 206–213 (RLYFMAAK) the chain is on the cytoplasmic side.

Belongs to the Casparian strip membrane proteins (CASP) family. As to quaternary structure, homodimer and heterodimers.

The protein localises to the cell membrane. This is CASP-like protein UU2 from Physcomitrium patens (Spreading-leaved earth moss).